The following is a 602-amino-acid chain: Basic-leucine zipper transcription factor B (602 aa).

Residues 1-10 (MNQFYQSTTG) show a composition bias toward polar residues. The segment at 1–128 (MNQFYQSTTG…NRVNQNLASR (128 aa)) is disordered. 2 stretches are compositionally biased toward low complexity: residues 11–54 (GQQN…TSTS) and 66–102 (QQQI…YNGD). The stretch at 58-94 (KNKDNQSKQQQIQQQQIQQQQQQQQQQQQQIQQQSVD) forms a coiled coil. The bZIP domain occupies 113–176 (ENKKNRNRVN…GVEIMKPDPA (64 aa)). Residues 115–135 (KKNRNRVNQNLASRNYRQRKK) form a basic motif region. The leucine-zipper stretch occupies residues 138 to 145 (IKEIEEKL). Disordered stretches follow at residues 328–401 (TNLS…QNNN) and 525–602 (QNQT…PSRQ). 3 stretches are compositionally biased toward low complexity: residues 336–350 (PNPT…TQST), 358–401 (LTLL…QNNN), and 525–592 (QNQT…SSPY). Positions 509–552 (TFSQQTQQLQQAQLQLQNQTKQQQQQLQNNNNNNNNNNNNNNSF) form a coiled coil. A compositionally biased stretch (polar residues) spans 593-602 (NHHQQQPSRQ).

Belongs to the bZIP family. As to quaternary structure, binds DNA as a dimer. Heterodimerizes with dimA; in vitro. Also able to form homodimer; in vitro.

It is found in the nucleus. Functionally, transcriptional regulator involved in DIF-1 signaling. DIF-1 (Differentiation Inducing Factor-1) is a signal molecule involved in the differentiation of pstO (prestalk-O) cells. May be a direct activator of ecmA. The sequence is that of Basic-leucine zipper transcription factor B (dimB) from Dictyostelium discoideum (Social amoeba).